A 329-amino-acid polypeptide reads, in one-letter code: Serpentine receptor class alpha-8 (329 aa).

The next 6 membrane-spanning stretches (helical) occupy residues 26–46 (VDLI…KMVL), 60–80 (FLNI…VVVI), 141–161 (IFVG…TGKL), 187–207 (TIHF…SVAL), 231–251 (VIES…FMFI), and 273–293 (FWVV…LLLI).

This sequence belongs to the nematode receptor-like protein sra family.

It localises to the membrane. The protein is Serpentine receptor class alpha-8 (sra-8) of Caenorhabditis elegans.